Consider the following 245-residue polypeptide: 23S rRNA (guanosine-2'-O-)-methyltransferase RlmB (245 aa).

S-adenosyl-L-methionine contacts are provided by Gly-197, Ile-217, and Leu-226.

It belongs to the class IV-like SAM-binding methyltransferase superfamily. RNA methyltransferase TrmH family. RlmB subfamily.

It localises to the cytoplasm. The catalysed reaction is guanosine(2251) in 23S rRNA + S-adenosyl-L-methionine = 2'-O-methylguanosine(2251) in 23S rRNA + S-adenosyl-L-homocysteine + H(+). Functionally, specifically methylates the ribose of guanosine 2251 in 23S rRNA. The chain is 23S rRNA (guanosine-2'-O-)-methyltransferase RlmB from Pasteurella multocida (strain Pm70).